The chain runs to 476 residues: Undecaprenyl-phosphate galactose phosphotransferase (476 aa).

A run of 5 helical transmembrane segments spans residues 15–35, 52–72, 93–113, 115–135, and 283–303; these read IFLA…SLGC, LDTR…WFWI, TIVI…WQFS, YVWV…RALT, and FDIV…IYLW. Residues 304 to 476 are Cytoplasmic-facing; it reads YKVTRDGGPA…KVVLRRDGAY (173 aa).

This sequence belongs to the bacterial sugar transferase family.

Its subcellular location is the cell inner membrane. It carries out the reaction di-trans,octa-cis-undecaprenyl phosphate + UDP-alpha-D-galactose = alpha-D-galactosyl-di-trans,octa-cis-undecaprenyl diphosphate + UMP. The protein operates within bacterial outer membrane biogenesis; LPS O-antigen biosynthesis. Its function is as follows. Is responsible for transferring galactose-1-phosphate to the lipid precursor undecaprenol phosphate in the first steps of O-polysaccharide biosynthesis. This Salmonella typhimurium (strain LT2 / SGSC1412 / ATCC 700720) protein is Undecaprenyl-phosphate galactose phosphotransferase (rfbP).